We begin with the raw amino-acid sequence, 152 residues long: Xanthine-guanine phosphoribosyltransferase (152 aa).

Residues 37–38 (RG), R69, and 88–96 (DDLVDTGGT) each bind 5-phospho-alpha-D-ribose 1-diphosphate. R69 provides a ligand contact to GMP. Position 89 (D89) interacts with Mg(2+). Guanine is bound by residues D92 and I135. Xanthine contacts are provided by D92 and I135. GMP is bound by residues 92 to 96 (DTGGT) and 134 to 135 (WI).

This sequence belongs to the purine/pyrimidine phosphoribosyltransferase family. XGPT subfamily. In terms of assembly, homotetramer. Mg(2+) is required as a cofactor.

It localises to the cell inner membrane. It carries out the reaction GMP + diphosphate = guanine + 5-phospho-alpha-D-ribose 1-diphosphate. It catalyses the reaction XMP + diphosphate = xanthine + 5-phospho-alpha-D-ribose 1-diphosphate. The enzyme catalyses IMP + diphosphate = hypoxanthine + 5-phospho-alpha-D-ribose 1-diphosphate. Its pathway is purine metabolism; GMP biosynthesis via salvage pathway; GMP from guanine: step 1/1. It participates in purine metabolism; XMP biosynthesis via salvage pathway; XMP from xanthine: step 1/1. Its function is as follows. Purine salvage pathway enzyme that catalyzes the transfer of the ribosyl-5-phosphate group from 5-phospho-alpha-D-ribose 1-diphosphate (PRPP) to the N9 position of the 6-oxopurines guanine and xanthine to form the corresponding ribonucleotides GMP (guanosine 5'-monophosphate) and XMP (xanthosine 5'-monophosphate), with the release of PPi. To a lesser extent, also acts on hypoxanthine. This Yersinia pseudotuberculosis serotype O:1b (strain IP 31758) protein is Xanthine-guanine phosphoribosyltransferase.